A 505-amino-acid chain; its full sequence is Bifunctional pantoate ligase/cytidylate kinase (505 aa).

A pantoate--beta-alanine ligase region spans residues 1 to 268; sequence MHQWRKHQQS…CGETRLIDHT (268 aa). 18–25 is an ATP binding site; it reads MGALHRGH. Residue His25 is the Proton donor of the active site. A (R)-pantoate-binding site is contributed by Gln53. Residue Gln53 coordinates beta-alanine. Residue 142-145 participates in ATP binding; sequence GEKD. Gln148 is a (R)-pantoate binding site. ATP contacts are provided by residues Val171 and 179 to 182; that span reads CSSR. Positions 269 to 505 are cytidylate kinase; the sequence is FLMSRQPIVA…PEEVWPTAGR (237 aa).

It in the N-terminal section; belongs to the pantothenate synthetase family. The protein in the C-terminal section; belongs to the cytidylate kinase family. Type 1 subfamily.

It is found in the cytoplasm. The enzyme catalyses (R)-pantoate + beta-alanine + ATP = (R)-pantothenate + AMP + diphosphate + H(+). The catalysed reaction is CMP + ATP = CDP + ADP. It catalyses the reaction dCMP + ATP = dCDP + ADP. The protein operates within cofactor biosynthesis; (R)-pantothenate biosynthesis; (R)-pantothenate from (R)-pantoate and beta-alanine: step 1/1. Its function is as follows. Catalyzes the condensation of pantoate with beta-alanine in an ATP-dependent reaction via a pantoyl-adenylate intermediate. Functionally, catalyzes the transfer of a phosphate group from ATP to either CMP or dCMP to form CDP or dCDP and ADP, respectively. The polypeptide is Bifunctional pantoate ligase/cytidylate kinase (Prochlorococcus marinus (strain MIT 9313)).